A 158-amino-acid polypeptide reads, in one-letter code: C-type natriuretic peptide 3 (158 aa).

The signal sequence occupies residues 1–21; sequence MSLNLPGYALFFILLVASSGA. Residues 22–136 constitute a propeptide that is removed on maturation; that stretch reads KPAPDLQILE…SKRSRSRYKK (115 aa). Residues 32-95 are disordered; it reads PPLSSLEEQE…EVQERGRGTG (64 aa). Over residues 47–64 the composition is skewed to basic and acidic residues; that stretch reads VQEKVQEQQEEVQEKVQE. Acidic residues predominate over residues 65-86; the sequence is QQEEVQEQQEEVQEQQEEQQEE. Residues C142 and C158 are joined by a disulfide bond.

The protein belongs to the natriuretic peptide family.

Its subcellular location is the secreted. Its function is as follows. Exhibits natriuretic and vasodepressant activity. Has cGMP-stimulating activity. May help to regulate body fluid homeostasis in a variety of aquatic environments. This chain is C-type natriuretic peptide 3, found in Takifugu rubripes (Japanese pufferfish).